A 761-amino-acid polypeptide reads, in one-letter code: Phosphoribosylformylglycinamidine synthase subunit PurL (761 aa).

His58 is a catalytic residue. ATP contacts are provided by Tyr61 and Lys105. Glu107 is a binding site for Mg(2+). Residues Ser108 to His111 and Arg130 contribute to the substrate site. Catalysis depends on His109, which acts as the Proton acceptor. Residue Asp131 coordinates Mg(2+). Gln259 contributes to the substrate binding site. Asp287 lines the Mg(2+) pocket. A substrate-binding site is contributed by Glu331–Gln333. Asn519 and Gly556 together coordinate ATP. A Mg(2+)-binding site is contributed by Asn557. Ser559 lines the substrate pocket.

Belongs to the FGAMS family. As to quaternary structure, monomer. Part of the FGAM synthase complex composed of 1 PurL, 1 PurQ and 2 PurS subunits.

It is found in the cytoplasm. It catalyses the reaction N(2)-formyl-N(1)-(5-phospho-beta-D-ribosyl)glycinamide + L-glutamine + ATP + H2O = 2-formamido-N(1)-(5-O-phospho-beta-D-ribosyl)acetamidine + L-glutamate + ADP + phosphate + H(+). It participates in purine metabolism; IMP biosynthesis via de novo pathway; 5-amino-1-(5-phospho-D-ribosyl)imidazole from N(2)-formyl-N(1)-(5-phospho-D-ribosyl)glycinamide: step 1/2. Its function is as follows. Part of the phosphoribosylformylglycinamidine synthase complex involved in the purines biosynthetic pathway. Catalyzes the ATP-dependent conversion of formylglycinamide ribonucleotide (FGAR) and glutamine to yield formylglycinamidine ribonucleotide (FGAM) and glutamate. The FGAM synthase complex is composed of three subunits. PurQ produces an ammonia molecule by converting glutamine to glutamate. PurL transfers the ammonia molecule to FGAR to form FGAM in an ATP-dependent manner. PurS interacts with PurQ and PurL and is thought to assist in the transfer of the ammonia molecule from PurQ to PurL. The protein is Phosphoribosylformylglycinamidine synthase subunit PurL of Rhodococcus opacus (strain B4).